The chain runs to 493 residues: EGF-containing fibulin-like extracellular matrix protein 1 (493 aa).

The N-terminal stretch at methionine 1 to serine 17 is a signal peptide. An EGF-like 1; atypical domain is found at tyrosine 26–leucine 71. One can recognise an EGF-like 2; calcium-binding domain in the interval aspartate 173–valine 213. 15 disulfide bridges follow: cysteine 177–cysteine 190, cysteine 184–cysteine 199, cysteine 201–cysteine 212, cysteine 218–cysteine 228, cysteine 224–cysteine 237, cysteine 239–cysteine 252, cysteine 258–cysteine 268, cysteine 264–cysteine 277, cysteine 279–cysteine 292, cysteine 298–cysteine 309, cysteine 305–cysteine 318, cysteine 320–cysteine 332, cysteine 338–cysteine 350, cysteine 344–cysteine 359, and cysteine 365–cysteine 377. Residues aspartate 214–valine 253 form the EGF-like 3; calcium-binding domain. N-linked (GlcNAc...) asparagine glycosylation occurs at asparagine 249. One can recognise an EGF-like 4; calcium-binding domain in the interval aspartate 254 to glutamate 293. The interval aspartate 259–phenylalanine 493 is mediates interaction with TIMP3. One can recognise an EGF-like 5; calcium-binding domain in the interval aspartate 294–glutamine 333. The region spanning aspartate 334 to valine 378 is the EGF-like 6; calcium-binding domain.

This sequence belongs to the fibulin family. As to quaternary structure, interacts with ECM1. Interacts with TIMP3. As to expression, expressed by olfactory ensheathing cells (at protein level). Detected in lung, intestine and kidney.

It localises to the secreted. The protein localises to the extracellular space. The protein resides in the extracellular matrix. Binds EGFR, the EGF receptor, inducing EGFR autophosphorylation and the activation of downstream signaling pathways. May play a role in cell adhesion and migration. May function as a negative regulator of chondrocyte differentiation. In the olfactory epithelium, it may regulate glial cell migration, differentiation and the ability of glial cells to support neuronal neurite outgrowth. The protein is EGF-containing fibulin-like extracellular matrix protein 1 (Efemp1) of Rattus norvegicus (Rat).